Here is a 954-residue protein sequence, read N- to C-terminus: Glycine dehydrogenase (decarboxylating) (954 aa).

K706 carries the N6-(pyridoxal phosphate)lysine modification.

Belongs to the GcvP family. As to quaternary structure, the glycine cleavage system is composed of four proteins: P, T, L and H. Pyridoxal 5'-phosphate is required as a cofactor.

It catalyses the reaction N(6)-[(R)-lipoyl]-L-lysyl-[glycine-cleavage complex H protein] + glycine + H(+) = N(6)-[(R)-S(8)-aminomethyldihydrolipoyl]-L-lysyl-[glycine-cleavage complex H protein] + CO2. Functionally, the glycine cleavage system catalyzes the degradation of glycine. The P protein binds the alpha-amino group of glycine through its pyridoxal phosphate cofactor; CO(2) is released and the remaining methylamine moiety is then transferred to the lipoamide cofactor of the H protein. The protein is Glycine dehydrogenase (decarboxylating) of Pseudomonas savastanoi pv. phaseolicola (strain 1448A / Race 6) (Pseudomonas syringae pv. phaseolicola (strain 1448A / Race 6)).